A 379-amino-acid polypeptide reads, in one-letter code: METNSNNFGELQELKDMATLAKLLARAPFLESQYYFRNRAVDSFRKFENDAAVMIQSWFRGCQVRAYMRHLNRVVTIIQKWWRSYLGRKFYQLVVEAAYYTMKMNLYNEMAVRIQRRWRGFRIRKYCFNYYYLKEYLRAVSETNDAIREALEEFAEMKEREERKVLLEREEKQKDYQARKMHYLLSTKQISGIYNSPFREHPDPWELRLQKAKPLGHQKYTAEKGKTSQSPSNWLACTSVHSFPQSESLPPISRKRCQGPFRDINEVLEQRYKPLEPTLRVAEPINHLRLAREAFKQEERMRNVQDKMFLPFSSYHKKEKYIPMIHSSSAYNSDSYGQKHFRSQDSKKWISDKDFQTVLPSFQLFSKYGKLYSKAGEIV.

IQ domains are found at residues 48-77, 71-100, and 107-136; these read ENDAAVMIQSWFRGCQVRAYMRHLNRVVTI, LNRVVTIIQKWWRSYLGRKFYQLVVEAAYY, and YNEMAVRIQRRWRGFRIRKYCFNYYYLKEY.

In terms of tissue distribution, strongly expressed in adult testis but weakly expressed in the spleen and thymus. Strongly expressed in round and elongating spermatids, and weakly or not expressed in spermatozoa.

The protein resides in the cytoplasm. This chain is Spermatogenesis-associated protein 17 (Spata17), found in Mus musculus (Mouse).